The chain runs to 541 residues: Calcium-dependent protein kinase 25 (541 aa).

A compositionally biased stretch (gly residues) spans 1–11 (MGQCCTGGGKA). The disordered stretch occupies residues 1 to 74 (MGQCCTGGGK…AGPIGEVLER (74 aa)). A lipid anchor (N-myristoyl glycine) is attached at G2. Positions 38 to 67 (AKQQPCSPAAKAAATEAAAAASSSKKPAGP) are enriched in low complexity. The region spanning 83–341 (YSIGKELGRG…AFQVLNHPWI (259 aa)) is the Protein kinase domain. ATP-binding positions include 89–97 (LGRGQFGVT) and K112. D207 functions as the Proton acceptor in the catalytic mechanism. Residues 347–377 (APDVPLDNVVLNRLKQFRAMNQFKKAALRII) form an autoinhibitory domain region. 4 EF-hand domains span residues 384–419 (EEIKGLKEMFKNIDKDNSGTITLEELKNGLAKQGTK), 420–455 (FSDNEIEQLMEAADADGNGIIDYEEFVTATVHMNKM), 456–491 (DREEHLYTAFQYFDKDNSGYITKEELEQALKEQGLY), and 493–526 (ANEIKDVITDADSNNDGRIDYSEFVAMMRKGSGC). D397, D399, S401, T403, E408, D433, D435, N437, E444, D469, D471, S473, Y475, E480, D504, N506, D508, R510, and E515 together coordinate Ca(2+).

Belongs to the protein kinase superfamily. Ser/Thr protein kinase family. CDPK subfamily. In terms of tissue distribution, specifically expressed in heading panicles, spikelets and mature pollen grains. Not expressed in vegetative tissues.

It is found in the membrane. It catalyses the reaction L-seryl-[protein] + ATP = O-phospho-L-seryl-[protein] + ADP + H(+). It carries out the reaction L-threonyl-[protein] + ATP = O-phospho-L-threonyl-[protein] + ADP + H(+). With respect to regulation, activated by calcium. Autophosphorylation may play an important role in the regulation of the kinase activity. Its function is as follows. May play a role in signal transduction pathways that involve calcium as a second messenger. In Oryza sativa subsp. japonica (Rice), this protein is Calcium-dependent protein kinase 25.